The primary structure comprises 357 residues: Velvet complex subunit 2 (357 aa).

The region spanning 32 to 341 (RRAERKYKLE…AQQGIKIPIR (310 aa)) is the Velvet domain.

This sequence belongs to the velvet family. VelB subfamily. Component of the heterotrimeric velvet complex composed of LAE1, VEL1 and VEL2; VEL1A acting as a bridging protein between LAE1 and VEL2. Forms a heterodimeric complex with VOS1; the formation of the VEL2-VOS1 complex is light-dependent.

It is found in the nucleus. Its subcellular location is the cytoplasm. Functionally, component of the velvet transcription factor complex that controls sexual/asexual developmental ratio in response to light, promoting sexual development in the darkness while stimulating asexual sporulation under illumination. The velvet complex acts as a global regulator for secondary metabolite gene expression. Component of the VEL2-VOS1 heterodimeric complex that plays a dual role in activating genes associated with spore maturation and repressing certain development-associated genes. The complex binds DNA through the DNA-binding domain of VOS1 that recognizes an 11-nucleotide consensus sequence 5'-CTGGCCGCGGC-3' consisting of two motifs in the promoters of key developmental regulatory genes. The VEL2-VOS1 complex is required for normal pseudothecium development and regulates asexual spore compartmentalization, pigmentation and germination. This Cochliobolus heterostrophus (strain C5 / ATCC 48332 / race O) (Southern corn leaf blight fungus) protein is Velvet complex subunit 2.